Reading from the N-terminus, the 926-residue chain is Armadillo repeat-containing protein 5 (926 aa).

Residues Pro82–Gly104 are compositionally biased toward low complexity. The disordered stretch occupies residues Pro82–Ser111. 7 ARM repeats span residues Gly139–Met179, Pro181–Asp221, Pro223–Arg263, Arg267–Ala306, Gln307–Glu354, Ala355–Ala399, and Gly401–Thr440. Ser337 bears the Phosphoserine mark. The tract at residues Trp472 to Trp516 is disordered. Polar residues predominate over residues Glu484–Arg499. Residues Pro745–Ala813 form the BTB domain.

In terms of assembly, substrate-recognition component of the BCR(ARMC5) E3 ubiquitin ligase complex, at least composed of CUL3, ARMC5 and RBX1. Post-translationally, ubiquitinated by a BCR (BTB-CUL3-RBX1) E3 ubiquitin ligase complex, leading to its degradation. Deubiquitinated by USP7. In terms of tissue distribution, expression is high in the thymus, stomach, bone marrow and lymphatic tissues (including lymph nodes and intestinal wall). Also expressed in the adrenal gland, skin and in brain structures, with noticeable levels found in the cerebellum.

It is found in the nucleus. It localises to the chromosome. The protein localises to the cytoplasm. Its pathway is protein modification; protein ubiquitination. Its function is as follows. Substrate-recognition component of a BCR (BTB-CUL3-RBX1) E3 ubiquitin ligase complex that terminates RNA polymerase II (Pol II) transcription in the promoter-proximal region of genes. The BCR(ARMC5) complex provides a quality checkpoint during transcription elongation by driving premature transcription termination of transcripts that are unfavorably configured for transcriptional elongation: the BCR(ARMC5) complex acts by mediating ubiquitination of Pol II subunit POLR2A phosphorylated at 'Ser-5' of the C-terminal domain (CTD), leading to POLR2A degradation. The BCR(ARMC5) complex acts in parallel of the integrator complex and is specific for RNA Pol II originating from the promoter-proximal zone: it does not ubiquitinate elongation-stalled RNA Pol II. The BCR(ARMC5) complex also acts as a regulator of fatty acid desaturation by mediating ubiquitination and degradation of SCAP-free SREBF1 and SREBF2. Involved in fetal development, T-cell function and adrenal gland growth homeostasis. Plays a role in steroidogenesis, modulates steroidogenic enzymes expression and cortisol production. In Mus musculus (Mouse), this protein is Armadillo repeat-containing protein 5.